The primary structure comprises 166 residues: Mitochondrial fission process protein 1 (166 aa).

A run of 2 helical transmembrane segments spans residues 34-54 and 80-100; these read SLVP…YVLA and AVVD…GFTI. Position 123 is an N6-succinyllysine (K123). Residues 129–149 traverse the membrane as a helical segment; it reads LGLLTIPIIIHPIDRSVDFLL.

The protein belongs to the MTFP1 family.

It is found in the mitochondrion inner membrane. Functionally, involved in the mitochondrial division probably by regulating membrane fission. Loss-of-function induces the release of cytochrome c, which activates the caspase cascade and leads to apoptosis. This is Mitochondrial fission process protein 1 (MTFP1) from Homo sapiens (Human).